The primary structure comprises 216 residues: Cobalt-zinc-cadmium resistance protein CzcN (216 aa).

The next 3 helical transmembrane spans lie at 27 to 47 (IGVW…GHSR), 50 to 70 (GTWV…LATV), and 116 to 136 (ESLA…PAVI).

This sequence to A.xylosoxydans NccN.

The protein localises to the cell inner membrane. Component of the CZC cation-efflux system that confers resistance to cobalt, zinc and cadmium. The chain is Cobalt-zinc-cadmium resistance protein CzcN (czcN) from Cupriavidus metallidurans (strain ATCC 43123 / DSM 2839 / NBRC 102507 / CH34) (Ralstonia metallidurans).